Consider the following 729-residue polypeptide: 1,4-alpha-glucan branching enzyme GlgB (729 aa).

The active-site Nucleophile is the Asp409. Glu462 acts as the Proton donor in catalysis.

This sequence belongs to the glycosyl hydrolase 13 family. GlgB subfamily. In terms of assembly, monomer.

The enzyme catalyses Transfers a segment of a (1-&gt;4)-alpha-D-glucan chain to a primary hydroxy group in a similar glucan chain.. Its pathway is glycan biosynthesis; glycogen biosynthesis. Functionally, catalyzes the formation of the alpha-1,6-glucosidic linkages in glycogen by scission of a 1,4-alpha-linked oligosaccharide from growing alpha-1,4-glucan chains and the subsequent attachment of the oligosaccharide to the alpha-1,6 position. This chain is 1,4-alpha-glucan branching enzyme GlgB, found in Saccharophagus degradans (strain 2-40 / ATCC 43961 / DSM 17024).